The sequence spans 728 residues: MAMFNGDVEDGGRGDASCGKDLKRYLMLMGVVALVVLFGAFIYRQSSGGLRLGAMLEQMGRGTGPAVNVPVQQGGPSAAVNPAMSVPAGARVAPPSAAGAIATMPPMVDFGPAPIGAGGPFSSVVTLLRNSVVAVTASSANGQAMPDPLGLANPDGLPHFANPATRSVENIGTGVIVRNDGFIVTNYHVVRGANSVFVTVQDDVGSTRYSAEIIKMDEALDLALLKVAPKTPLTAAVLGDSDGVQVADEVIAIGTPFGLDMTVSRGIISAKRKSMVIEGVTHSNLLQTDAAINQGNSGGPLVISNGTVVGINTAIYTPNGAFAGIGFAVPSNQARLFILDEVGWLPTSTAEGASMGLVAMQRPMGGGVGAAGPAIFAGTRAPHTDGRQNMDCTTCHDLIPAGNGRPAPMMPIAAPIPPPPIPMGAVSPHTDGRQNMNCANCHQMLGGAAPIAAPGLGGGAYRFAQPPGSLAINIQGPRGGQSTAAGTGRVTLLGAALTPMSQRLGAQTGVPVGRGVFISGVTPNTPAATAGLRPGDVLLKVDGRPVRLPEEVSAIMVEMHAGRSVRLGVLRDGDVRNMTLVAGPAGLAAAAVQAPAIADMAQPPMGGMAPTAPGMVAVPGGPAVMPKPPTEFNWLGMEIETFQAPRPITGVPGAVPVPGAKGAQVAEVLVGSRAAVAGLQANDLILEVNNRPVAGPARLDAAIKGATNAGQQILLKVNRNGQEFWIVL.

Residues 1 to 21 (MAMFNGDVEDGGRGDASCGKD) are Cytoplasmic-facing. The chain crosses the membrane as a helical span at residues 22–42 (LKRYLMLMGVVALVVLFGAFI). The Lumenal segment spans residues 43 to 728 (YRQSSGGLRL…RNGQEFWIVL (686 aa)). Active-site charge relay system residues include His188, Asp221, and Ser297. The short motif at 375–398 (IFAGTRAPHTDGRQNMDCTTCHDL) is the MCR (magnetochrome) 1 element. 6 residues coordinate heme: Cys392, Cys395, His396, Cys438, Cys441, and His442. Residues 421 to 444 (IPMGAVSPHTDGRQNMNCANCHQM) carry the MCR 2 motif. PDZ domains follow at residues 471-573 (AINI…LRDG) and 622-721 (PAVM…NRNG).

In the N-terminal section; belongs to the peptidase S1C family. In terms of assembly, might interact with MamB via PDZ1. Heme serves as cofactor. In terms of processing, subject to autocatalytic cleavage; cleavage also requires MamO.

It localises to the magnetosome membrane. Autoproteolysis is stimulated by exogenous substrates or peptides that bind to its PDZ domains; may be stimulated by an environmental cue in vivo. Protease activity is tightly regulated; increasing its activity decreases substrate levels and disturbs biomineralization. Acts at 2 distinct steps of magnetosome formation; required for correct localization of proteins to the magnetosome while the protease activity is required for maturation of small magnetite crystals into larger, functional ones. The 2 functions are separable by mutation. Probably cleaves at least itself, MamO and MamP; cleavage requires the putative transport domain of MamO. Involved in localization of some proteins (at least MamA, MamC, MamF, MamI and MamJ) to the magnetosome. This chain is Magnetosome formation protease MamE (mamE), found in Paramagnetospirillum magneticum (strain ATCC 700264 / AMB-1) (Magnetospirillum magneticum).